Consider the following 317-residue polypeptide: Low affinity immunoglobulin gamma Fc region receptor II-a (317 aa).

The first 33 residues, 1–33 (MTMETQMSQNVCPRNLWLLQPLTVLLLLASADS), serve as a signal peptide directing secretion. Residues 34–217 (QAAAPPKAVL…PSMGSSSPMG (184 aa)) are Extracellular-facing. Ig-like C2-type domains lie at 39-118 (PKAV…VHLT) and 122-204 (EWLV…VTIT). Cystine bridges form between C62–C104 and C143–C187. Residues N97 and N178 are each glycosylated (N-linked (GlcNAc...) asparagine). Residues 218–240 (IIVAVVIATAVAAIVAAVVALIY) traverse the membrane as a helical segment. The Cytoplasmic portion of the chain corresponds to 241–317 (CRKKRISANS…PPNDHVNSNN (77 aa)). Y288 and Y304 each carry phosphotyrosine; by SRC-type Tyr-kinases. A disordered region spans residues 292 to 317 (NPRAPTDDDKNIYLTLPPNDHVNSNN).

In terms of assembly, interacts with IGHG1. Interacts with INPP5D/SHIP1 and INPPL1/SHIP2, regulating its function. Interacts with APCS and FGR. Interacts with HCK. In terms of processing, phosphorylated by SRC-type Tyr-kinases such as LYN, BLK, FYN, HCK and SYK. As to expression, found on monocytes, neutrophils and eosinophil platelets.

It is found in the cell membrane. Binds to the Fc region of immunoglobulins gamma. Low affinity receptor. By binding to IgG it initiates cellular responses against pathogens and soluble antigens. Promotes phagocytosis of opsonized antigens. This chain is Low affinity immunoglobulin gamma Fc region receptor II-a (FCGR2A), found in Homo sapiens (Human).